The sequence spans 552 residues: C-type lectin receptor-like tyrosine-protein kinase At1g52310 (552 aa).

The first 27 residues, 1-27 (MELKWVSCRKQSLFLISCLALLCLASL), serve as a signal peptide directing secretion. Topologically, residues 28–201 (DTISCESTQN…DIKCRNCHKY (174 aa)) are extracellular. Asn37, Asn59, Asn69, Asn106, Asn118, Asn137, Asn154, Asn169, and Asn180 each carry an N-linked (GlcNAc...) asparagine glycan. Residues 59–188 (NQTKCYAYFK…CNASHAFVCA (130 aa)) enclose the C-type lectin domain. 2 disulfides stabilise this stretch: Cys80/Cys187 and Cys164/Cys179. Residues 202 to 222 (LVILAVVSGLILFTTFAIILW) traverse the membrane as a helical segment. The Cytoplasmic portion of the chain corresponds to 223–552 (LLVYKRSKKR…QQLVQPLEVK (330 aa)). The 279-residue stretch at 268 to 546 (SEANRLAGDA…HVVHQLQQLV (279 aa)) folds into the Protein kinase domain. Residues 274 to 282 (AGDAKTGGT) and Lys296 contribute to the ATP site. Asp394 (proton acceptor) is an active-site residue.

It belongs to the protein kinase superfamily. Tyr protein kinase family.

Its subcellular location is the cell membrane. It carries out the reaction L-tyrosyl-[protein] + ATP = O-phospho-L-tyrosyl-[protein] + ADP + H(+). The protein is C-type lectin receptor-like tyrosine-protein kinase At1g52310 of Arabidopsis thaliana (Mouse-ear cress).